Consider the following 370-residue polypeptide: GTPase Obg (370 aa).

The region spanning 1 to 159 is the Obg domain; that stretch reads MKFIDEARIE…RMLKLELKVL (159 aa). The interval 128-147 is disordered; that stretch reads LHFKSSTNRAPRQKTDGKPG. Residues 160–334 form the OBG-type G domain; sequence ADVGLLGMPN…LCYAIYDYLS (175 aa). GTP is bound by residues 166–173, 191–195, 213–216, 284–287, and 315–317; these read GMPNAGKS, FTTLA, DIPG, NKLD, and SAL. Ser173 and Thr193 together coordinate Mg(2+).

Belongs to the TRAFAC class OBG-HflX-like GTPase superfamily. OBG GTPase family. Monomer. Requires Mg(2+) as cofactor.

Its subcellular location is the cytoplasm. Functionally, an essential GTPase which binds GTP, GDP and possibly (p)ppGpp with moderate affinity, with high nucleotide exchange rates and a fairly low GTP hydrolysis rate. Plays a role in control of the cell cycle, stress response, ribosome biogenesis and in those bacteria that undergo differentiation, in morphogenesis control. The sequence is that of GTPase Obg from Burkholderia orbicola (strain MC0-3).